A 139-amino-acid polypeptide reads, in one-letter code: uncharacterized protein (139 aa).

The helical transmembrane segment at 77 to 97 (YCFFFFLVLFLNGIIATRGKA) threads the bilayer.

It localises to the mitochondrion membrane. This is an uncharacterized protein from Arabidopsis thaliana (Mouse-ear cress).